The following is a 690-amino-acid chain: Elongation factor G (690 aa).

Residues 8-283 (EDYRNFGIMA…AVVDYLPSPL (276 aa)) enclose the tr-type G domain. GTP is bound by residues 17–24 (AHIDAGKT), 81–85 (DTPGH), and 135–138 (NKMD).

This sequence belongs to the TRAFAC class translation factor GTPase superfamily. Classic translation factor GTPase family. EF-G/EF-2 subfamily.

It is found in the cytoplasm. Its function is as follows. Catalyzes the GTP-dependent ribosomal translocation step during translation elongation. During this step, the ribosome changes from the pre-translocational (PRE) to the post-translocational (POST) state as the newly formed A-site-bound peptidyl-tRNA and P-site-bound deacylated tRNA move to the P and E sites, respectively. Catalyzes the coordinated movement of the two tRNA molecules, the mRNA and conformational changes in the ribosome. The sequence is that of Elongation factor G from Bradyrhizobium sp. (strain BTAi1 / ATCC BAA-1182).